The primary structure comprises 388 residues: Succinate--CoA ligase [ADP-forming] subunit beta (388 aa).

The region spanning 9-245 (KALLKEYGMP…KSQENERELK (237 aa)) is the ATP-grasp domain. Residues Lys46, 53-55 (GRG), Glu100, Tyr103, and Glu108 contribute to the ATP site. Asn200 and Asp214 together coordinate Mg(2+). Residues Asn265 and 322-324 (GIV) each bind substrate.

The protein belongs to the succinate/malate CoA ligase beta subunit family. Heterotetramer of two alpha and two beta subunits. The cofactor is Mg(2+).

The enzyme catalyses succinate + ATP + CoA = succinyl-CoA + ADP + phosphate. It carries out the reaction GTP + succinate + CoA = succinyl-CoA + GDP + phosphate. The protein operates within carbohydrate metabolism; tricarboxylic acid cycle; succinate from succinyl-CoA (ligase route): step 1/1. In terms of biological role, succinyl-CoA synthetase functions in the citric acid cycle (TCA), coupling the hydrolysis of succinyl-CoA to the synthesis of either ATP or GTP and thus represents the only step of substrate-level phosphorylation in the TCA. The beta subunit provides nucleotide specificity of the enzyme and binds the substrate succinate, while the binding sites for coenzyme A and phosphate are found in the alpha subunit. This chain is Succinate--CoA ligase [ADP-forming] subunit beta, found in Acinetobacter baumannii (strain AB307-0294).